The following is a 554-amino-acid chain: Glucose-6-phosphate isomerase (554 aa).

Catalysis depends on glutamate 358, which acts as the Proton donor. Catalysis depends on residues histidine 389 and lysine 515. Residues 527-540 (ADNSPAPQSDSSTD) are compositionally biased toward polar residues. The tract at residues 527 to 554 (ADNSPAPQSDSSTDALVRRYRSERGRTS) is disordered. The segment covering 542–554 (LVRRYRSERGRTS) has biased composition (basic and acidic residues).

The protein belongs to the GPI family.

The protein localises to the cytoplasm. The enzyme catalyses alpha-D-glucose 6-phosphate = beta-D-fructose 6-phosphate. The protein operates within carbohydrate biosynthesis; gluconeogenesis. It functions in the pathway carbohydrate degradation; glycolysis; D-glyceraldehyde 3-phosphate and glycerone phosphate from D-glucose: step 2/4. In terms of biological role, catalyzes the reversible isomerization of glucose-6-phosphate to fructose-6-phosphate. The sequence is that of Glucose-6-phosphate isomerase from Mycobacterium avium (strain 104).